We begin with the raw amino-acid sequence, 161 residues long: Cytochrome c-type biogenesis protein CcmE (161 aa).

Over 1 to 8 (MNPRRKKR) the chain is Cytoplasmic. The helical; Signal-anchor for type II membrane protein transmembrane segment at 9–29 (LTLAVALVFGLGATIGLMLYA) threads the bilayer. The Periplasmic segment spans residues 30 to 161 (LSQNMDLFYT…SDEQKQGRVQ (132 aa)). Heme-binding residues include H129 and Y133.

It belongs to the CcmE/CycJ family.

The protein localises to the cell inner membrane. Heme chaperone required for the biogenesis of c-type cytochromes. Transiently binds heme delivered by CcmC and transfers the heme to apo-cytochromes in a process facilitated by CcmF and CcmH. This is Cytochrome c-type biogenesis protein CcmE from Photobacterium profundum (strain SS9).